The following is a 562-amino-acid chain: Putative transport protein NT01EI_2530 (562 aa).

The next 6 helical transmembrane spans lie at 8-28 (LLTGNYILLLFVVLALGLCLG), 32-52 (LGSIQLGNSIGVLVVSLLLGQ), 66-86 (FMLFIFCVGVEAGPNFFSIFF), 94-114 (MLALVMVASALCIALGLGKLF), 118-138 (IGLTAGMLAGSMTSTPVLVGA), and 158-178 (HLSLGYALTYLVGLVSLIFGA). 2 RCK C-terminal domains span residues 202–288 (LDND…SFRN) and 290–373 (KEVF…RIGF). A run of 5 helical transmembrane segments spans residues 383 to 403 (LLAFCAFFIIGLMIGLITFQF), 406 to 426 (FSFGIGNAAGLLFAGIMLGFL), 443 to 463 (MVKEFGLMVFMAGVGLSAGAG), 477 to 497 (IAGLIVSLVPVVICFLFGAFV), and 541 to 561 (IANVLLTLAGTLIIIVWPGVV).

The protein belongs to the AAE transporter (TC 2.A.81) family. YbjL subfamily.

It localises to the cell membrane. In Edwardsiella ictaluri (strain 93-146), this protein is Putative transport protein NT01EI_2530.